A 309-amino-acid polypeptide reads, in one-letter code: Foldase protein PrsA (309 aa).

An N-terminal signal peptide occupies residues 1–20 (MKKKIVAGAVTLLSVAVLAA). Cys21 carries the N-palmitoyl cysteine lipid modification. Residue Cys21 is the site of S-diacylglycerol cysteine attachment. One can recognise a PpiC domain in the interval 144–241 (TPEVTAQIIK…ASYYIVKLVS (98 aa)).

Belongs to the PrsA family.

The protein localises to the cell membrane. It catalyses the reaction [protein]-peptidylproline (omega=180) = [protein]-peptidylproline (omega=0). Its function is as follows. Plays a major role in protein secretion by helping the post-translocational extracellular folding of several secreted proteins. This chain is Foldase protein PrsA, found in Streptococcus gordonii (strain Challis / ATCC 35105 / BCRC 15272 / CH1 / DL1 / V288).